The chain runs to 291 residues: 4-hydroxy-tetrahydrodipicolinate synthase (291 aa).

Residue threonine 44 coordinates pyruvate. The Proton donor/acceptor role is filled by tyrosine 132. The active-site Schiff-base intermediate with substrate is lysine 160. Valine 202 lines the pyruvate pocket.

It belongs to the DapA family. Homotetramer; dimer of dimers.

The protein localises to the cytoplasm. The enzyme catalyses L-aspartate 4-semialdehyde + pyruvate = (2S,4S)-4-hydroxy-2,3,4,5-tetrahydrodipicolinate + H2O + H(+). It functions in the pathway amino-acid biosynthesis; L-lysine biosynthesis via DAP pathway; (S)-tetrahydrodipicolinate from L-aspartate: step 3/4. Functionally, catalyzes the condensation of (S)-aspartate-beta-semialdehyde [(S)-ASA] and pyruvate to 4-hydroxy-tetrahydrodipicolinate (HTPA). This Clostridium perfringens (strain ATCC 13124 / DSM 756 / JCM 1290 / NCIMB 6125 / NCTC 8237 / Type A) protein is 4-hydroxy-tetrahydrodipicolinate synthase.